The chain runs to 316 residues: Aspartate carbamoyltransferase catalytic subunit (316 aa).

Residues R66 and T67 each coordinate carbamoyl phosphate. K94 serves as a coordination point for L-aspartate. Carbamoyl phosphate is bound by residues R116, H146, and Q149. L-aspartate contacts are provided by R180 and R235. Residues G276 and P277 each contribute to the carbamoyl phosphate site.

The protein belongs to the aspartate/ornithine carbamoyltransferase superfamily. ATCase family. In terms of assembly, heterododecamer (2C3:3R2) of six catalytic PyrB chains organized as two trimers (C3), and six regulatory PyrI chains organized as three dimers (R2).

It carries out the reaction carbamoyl phosphate + L-aspartate = N-carbamoyl-L-aspartate + phosphate + H(+). It functions in the pathway pyrimidine metabolism; UMP biosynthesis via de novo pathway; (S)-dihydroorotate from bicarbonate: step 2/3. Its function is as follows. Catalyzes the condensation of carbamoyl phosphate and aspartate to form carbamoyl aspartate and inorganic phosphate, the committed step in the de novo pyrimidine nucleotide biosynthesis pathway. This is Aspartate carbamoyltransferase catalytic subunit from Stenotrophomonas maltophilia (strain R551-3).